Consider the following 424-residue polypeptide: UPF0229 protein PC1_1960 (424 aa).

The disordered stretch occupies residues 46-109; it reads IESGESVSIP…GQGDASKDGE (64 aa). A compositionally biased stretch (basic and acidic residues) spans 77 to 90; sequence PGNDHFVQNDKIER. The span at 92–101 shows a compositional bias: gly residues; it reads QGGGGGGSGQ.

It belongs to the UPF0229 family.

The protein is UPF0229 protein PC1_1960 of Pectobacterium carotovorum subsp. carotovorum (strain PC1).